Consider the following 212-residue polypeptide: Large ribosomal subunit protein uL3 (212 aa).

The interval 127-161 (NFKRGPMAHGSKNHRLPGSTGAGTTPGRVFPGKRM) is disordered.

Belongs to the universal ribosomal protein uL3 family. As to quaternary structure, part of the 50S ribosomal subunit. Forms a cluster with proteins L14 and L19.

Its function is as follows. One of the primary rRNA binding proteins, it binds directly near the 3'-end of the 23S rRNA, where it nucleates assembly of the 50S subunit. In Thermosynechococcus vestitus (strain NIES-2133 / IAM M-273 / BP-1), this protein is Large ribosomal subunit protein uL3.